The sequence spans 289 residues: Probable endonuclease 4 (289 aa).

Zn(2+) is bound by residues His75, His115, Glu153, Asp187, His190, His224, Asp237, His239, and Glu269.

It belongs to the AP endonuclease 2 family. The cofactor is Zn(2+).

It carries out the reaction Endonucleolytic cleavage to 5'-phosphooligonucleotide end-products.. In terms of biological role, endonuclease IV plays a role in DNA repair. It cleaves phosphodiester bonds at apurinic or apyrimidinic (AP) sites, generating a 3'-hydroxyl group and a 5'-terminal sugar phosphate. This Chlamydia abortus (strain DSM 27085 / S26/3) (Chlamydophila abortus) protein is Probable endonuclease 4.